The following is a 521-amino-acid chain: MFS siderochrome iron transporter 1 (521 aa).

Polar residues predominate over residues 1–10 (MDKTASLTSQ). The segment at 1–29 (MDKTASLTSQDAEKHDPDALRKERATDPP) is disordered. Residues 11–29 (DAEKHDPDALRKERATDPP) are compositionally biased toward basic and acidic residues. The next 5 membrane-spanning stretches (helical) occupy residues 62-82 (WGLF…PLMG), 99-119 (FLSL…AFGC), 126-146 (WSFN…GGTQ), 148-168 (FVAL…NMPV), and 187-207 (ILSI…WPLI). Asparagine 209 is a glycosylation site (N-linked (GlcNAc...) asparagine). 6 consecutive transmembrane segments (helical) span residues 229–249 (YLLF…FFVF), 330–350 (LAWS…ASTL), 379–399 (VIIA…VEQP), 404–424 (KGTL…TTTA), 431–451 (LGWN…LYAI), and 466–486 (GLTA…ALYA). N-linked (GlcNAc...) asparagine glycosylation occurs at asparagine 487. The helical transmembrane segment at 491 to 511 (AVPVYVSGALIIASGAMALLL) threads the bilayer.

It belongs to the major facilitator superfamily.

Its subcellular location is the membrane. Its function is as follows. Major facilitator transporter probably involved in siderophore basidioferrin transmembrane transport. The polypeptide is MFS siderochrome iron transporter 1 (Ceriporiopsis subvermispora (strain B) (White-rot fungus)).